A 384-amino-acid polypeptide reads, in one-letter code: Histidinol-phosphate aminotransferase 2 (384 aa).

Lysine 236 is subject to N6-(pyridoxal phosphate)lysine.

Belongs to the class-II pyridoxal-phosphate-dependent aminotransferase family. Histidinol-phosphate aminotransferase subfamily. As to quaternary structure, homodimer. The cofactor is pyridoxal 5'-phosphate.

It catalyses the reaction L-histidinol phosphate + 2-oxoglutarate = 3-(imidazol-4-yl)-2-oxopropyl phosphate + L-glutamate. The protein operates within amino-acid biosynthesis; L-histidine biosynthesis; L-histidine from 5-phospho-alpha-D-ribose 1-diphosphate: step 7/9. The polypeptide is Histidinol-phosphate aminotransferase 2 (hisC2) (Nostoc sp. (strain PCC 7120 / SAG 25.82 / UTEX 2576)).